Consider the following 112-residue polypeptide: MVAAKKTKKTHESINSRLALVMKSGKFTLGYKTVLESLRSNKGKLIIIANNCPPLRKSEIEYYAMLAKVGVHHYNGNNVDLGTACGKYFRVCCLSIIDAGDSDIIKSIPGDH.

Belongs to the eukaryotic ribosomal protein eL30 family.

In Euphorbia esula (Leafy spurge), this protein is Large ribosomal subunit protein eL30 (RPL30).